Here is a 761-residue protein sequence, read N- to C-terminus: Zinc finger protein 711 (761 aa).

5 consecutive C2H2-type zinc fingers follow at residues 383 to 408 (YPCHICGKKFKSRGFLKRHMKNHPDH), 414 to 436 (YQCTDCEFTTNKKVSFHNHLESH), 476 to 499 (HKCKYCEYETAEQGLLNRHLLAVH), 505 to 527 (HVCVECAKGFRHPSELKKHMRTH), and 533 to 556 (FHCQHCEFSCADQSNLKTHIKSKH). The segment at 562 to 584 (FKCGHCPQAFADDKELQRHAEIF) adopts a C2H2-type 6; atypical zinc-finger fold. Residues cysteine 564, cysteine 567, and histidine 580 each coordinate Zn(2+). C2H2-type zinc fingers lie at residues 590 to 613 (HQCPHCEHKSTNSSDLKRHIISVH), 619 to 641 (HKCDVCEKGFHRPSELKKHSETH), 647 to 670 (HQCRHCDFKTLDPFTLSRHILSVH), 676 to 698 (FKCKRCKRGFRHQNELKKHMKTH), 704 to 727 (YQCQYCEYNTTDASGFKRHVISIH), and 733 to 755 (HRCDYCKKGFRRPSEKNQHIMRH).

It belongs to the krueppel C2H2-type zinc-finger protein family. As to expression, present in ovary and brain but not in other tissues (at protein level).

Its subcellular location is the nucleus. The protein resides in the cytoplasm. Functionally, transcription regulator required for brain development. Probably acts as a transcription factor that binds to the promoter of target genes, leading to activate their expression. This Danio rerio (Zebrafish) protein is Zinc finger protein 711 (znf711).